Consider the following 78-residue polypeptide: NAD(P)H-quinone oxidoreductase subunit O (78 aa).

It belongs to the complex I NdhO subunit family. In terms of assembly, NDH-1 can be composed of about 15 different subunits; different subcomplexes with different compositions have been identified which probably have different functions.

The protein localises to the cell inner membrane. The enzyme catalyses a plastoquinone + NADH + (n+1) H(+)(in) = a plastoquinol + NAD(+) + n H(+)(out). It catalyses the reaction a plastoquinone + NADPH + (n+1) H(+)(in) = a plastoquinol + NADP(+) + n H(+)(out). In terms of biological role, NDH-1 shuttles electrons from an unknown electron donor, via FMN and iron-sulfur (Fe-S) centers, to quinones in the respiratory and/or the photosynthetic chain. The immediate electron acceptor for the enzyme in this species is believed to be plastoquinone. Couples the redox reaction to proton translocation, and thus conserves the redox energy in a proton gradient. Cyanobacterial NDH-1 also plays a role in inorganic carbon-concentration. The sequence is that of NAD(P)H-quinone oxidoreductase subunit O from Gloeobacter violaceus (strain ATCC 29082 / PCC 7421).